The sequence spans 217 residues: MNQSLLAPFGTAIERVEAGLNALRQGQGVLVVDDEDRENEGDLIFAAQTLTNAQMAMLIRECSGIVCLCLPDEKVKALELPPMVENNSSQYGTAFTVSIEAKVGVTTGVSAADRVTTIKAAIADGAKPSDLARPGHVYPLRAQPGGVLTRRGHTEGTIDLMQLAGLKPAGVLCEVTNPDGTMARLPEIIAFGAQHNIPVLTIEDIVLYRKSLLANVG.

Residues 37–38 (RE), aspartate 42, 150–154 (RRGHT), and glutamate 174 each bind D-ribulose 5-phosphate. Glutamate 38 provides a ligand contact to Mg(2+). Histidine 153 provides a ligand contact to Mg(2+).

Belongs to the DHBP synthase family. In terms of assembly, homodimer. Mg(2+) serves as cofactor. Mn(2+) is required as a cofactor.

It carries out the reaction D-ribulose 5-phosphate = (2S)-2-hydroxy-3-oxobutyl phosphate + formate + H(+). It functions in the pathway cofactor biosynthesis; riboflavin biosynthesis; 2-hydroxy-3-oxobutyl phosphate from D-ribulose 5-phosphate: step 1/1. Functionally, catalyzes the conversion of D-ribulose 5-phosphate to formate and 3,4-dihydroxy-2-butanone 4-phosphate. This is 3,4-dihydroxy-2-butanone 4-phosphate synthase from Shewanella sp. (strain W3-18-1).